We begin with the raw amino-acid sequence, 64 residues long: MPIVHIDLIAGRSQEQLKNLVKDVTDAVSKNTGAPAEHIHVILSEMQKNRYSVGGVLKSDEEAE.

Proline 2 functions as the Proton acceptor; via imino nitrogen in the catalytic mechanism.

The protein belongs to the 4-oxalocrotonate tautomerase family.

This is Probable tautomerase lp_1712 from Lactiplantibacillus plantarum (strain ATCC BAA-793 / NCIMB 8826 / WCFS1) (Lactobacillus plantarum).